A 132-amino-acid polypeptide reads, in one-letter code: Small ribosomal subunit protein uS9 (132 aa).

The disordered stretch occupies residues G104–R132. The segment covering K113 to R132 has biased composition (basic residues).

It belongs to the universal ribosomal protein uS9 family.

The protein is Small ribosomal subunit protein uS9 of Natranaerobius thermophilus (strain ATCC BAA-1301 / DSM 18059 / JW/NM-WN-LF).